The sequence spans 197 residues: MAAVKDSCGKGEMATGNGRRLHLGIPEAVFVEDVDSFMKQPGNETADTVLKKLDEQYQKYKFMELNLAQKKRRLKGQIPEIKQTLEILKYMQKKKESTNSMETRFLLADNLYCKASVPPTDKVCLWLGANVMLEYDIDEAQALLEKNLSTATKNLDSLEEDLDFLRDQFTTTEVNMARVYNWDVKRRNKDDSTKNKA.

Ala-2 is subject to N-acetylalanine. Lys-59 is modified (N6-acetyllysine).

This sequence belongs to the prefoldin subunit alpha family. As to quaternary structure, heterohexamer of two PFD-alpha type and four PFD-beta type subunits. Binds to the C-terminal part of VHL. In terms of tissue distribution, ubiquitous.

It is found in the cytoplasm. Its subcellular location is the nucleus. Its function is as follows. Binds specifically to cytosolic chaperonin (c-CPN) and transfers target proteins to it. Binds to nascent polypeptide chain and promotes folding in an environment in which there are many competing pathways for nonnative proteins. This chain is Prefoldin subunit 3 (VBP1), found in Homo sapiens (Human).